Here is a 495-residue protein sequence, read N- to C-terminus: Serine/threonine protein phosphatase 2A 57 kDa regulatory subunit B' alpha isoform (495 aa).

The segment covering 1 to 13 has biased composition (basic residues); that stretch reads MFKKIMKGANRKA. 2 disordered regions span residues 1–61 and 462–495; these read MFKK…AATT and QAKS…MITS. The span at 49-61 shows a compositional bias: polar residues; sequence VPSSPNSMAAATT.

Belongs to the phosphatase 2A regulatory subunit B56 family. As to quaternary structure, PP2A consists of a common heteromeric enzyme, composed of a catalytic subunit (subunits C), a constant regulatory subunit (subunit A), and a variety of regulatory subunits such as subunits B (the R2/B/PR55/B55, R3/B''/PR72/PR130/PR59 and R5/B'/B56 families). Interacts with BZR1. Interacts with BRI1. Interacts with SRK2E/OST1. Expressed ubiquitously, higher levels in leaves.

The protein localises to the nucleus. It localises to the cytoplasm. Functionally, the B regulatory subunit may modulate substrate selectivity and catalytic activity, and may also direct the localization of the catalytic enzyme to a particular subcellular compartment. Required for the formation of the PP2A holoenzyme that positively regulates brassinosteroid signaling by dephosphorylating and activating BZR1. The polypeptide is Serine/threonine protein phosphatase 2A 57 kDa regulatory subunit B' alpha isoform (B'ALPHA) (Arabidopsis thaliana (Mouse-ear cress)).